The following is a 161-amino-acid chain: UPF0262 protein SPOA0072 (161 aa).

The tract at residues 1-21 is disordered; it reads MTMSRISHIELDDSNLPPPTP.

Belongs to the UPF0262 family.

This chain is UPF0262 protein SPOA0072, found in Ruegeria pomeroyi (strain ATCC 700808 / DSM 15171 / DSS-3) (Silicibacter pomeroyi).